Reading from the N-terminus, the 332-residue chain is Protein FAM131B (332 aa).

The disordered stretch occupies residues 1 to 22; it reads MDSTSSLHGSSLHRPSTEQTRT. A phosphoserine mark is found at Ser47, Ser114, and Ser117. Residues 221–332 form a disordered region; sequence LGPAFDDSQP…FDEEEGDANN (112 aa). Basic and acidic residues-rich tracts occupy residues 272-281 and 288-302; these read PVEEEKRPLA and AGCR…REDP. Residues Ser295, Ser297, and Ser313 each carry the phosphoserine modification. Position 316 is a phosphothreonine (Thr316). Residues Ser317, Ser318, and Ser322 each carry the phosphoserine modification. The span at 323-332 shows a compositional bias: acidic residues; the sequence is FDEEEGDANN.

Belongs to the FAM131 family.

The sequence is that of Protein FAM131B (Fam131b) from Rattus norvegicus (Rat).